The primary structure comprises 520 residues: 2-isopropylmalate synthase (520 aa).

The Pyruvate carboxyltransferase domain maps to 12-274; sequence IRIFDTTLRD…DSAINTPRIV (263 aa). Mn(2+) contacts are provided by D21, H209, H211, and N245. Residues 396–520 form a regulatory domain region; the sequence is RLASMTISDV…VVAGKTAAVA (125 aa).

This sequence belongs to the alpha-IPM synthase/homocitrate synthase family. LeuA type 1 subfamily. As to quaternary structure, homodimer. It depends on Mn(2+) as a cofactor.

The protein localises to the cytoplasm. The enzyme catalyses 3-methyl-2-oxobutanoate + acetyl-CoA + H2O = (2S)-2-isopropylmalate + CoA + H(+). The protein operates within amino-acid biosynthesis; L-leucine biosynthesis; L-leucine from 3-methyl-2-oxobutanoate: step 1/4. Functionally, catalyzes the condensation of the acetyl group of acetyl-CoA with 3-methyl-2-oxobutanoate (2-ketoisovalerate) to form 3-carboxy-3-hydroxy-4-methylpentanoate (2-isopropylmalate). The polypeptide is 2-isopropylmalate synthase (Xanthomonas euvesicatoria pv. vesicatoria (strain 85-10) (Xanthomonas campestris pv. vesicatoria)).